A 964-amino-acid chain; its full sequence is Fanconi-associated nuclease 1 homolog (964 aa).

Positions 31–56 (SRSLQDDAADAEREAAAGGSSSGGGD) are disordered. The UBZ4-type zinc-finger motif lies at 63-92 (WVACPVCGESIRGTDYCVNTHLDICLTRGT). Cys-66, Cys-69, His-83, and Cys-87 together coordinate Zn(2+). Mn(2+)-binding residues include Glu-786, Asp-907, Glu-926, and Val-927. Positions 844–958 (GIAEEILISS…GFDVEVCKVS (115 aa)) constitute a VRR-NUC domain.

It belongs to the FAN1 family. It depends on Mn(2+) as a cofactor. The cofactor is Mg(2+).

It carries out the reaction Hydrolytically removes 5'-nucleotides successively from the 3'-hydroxy termini of 3'-hydroxy-terminated oligonucleotides.. Functionally, nuclease required for the repair of DNA interstrand cross-links (ICL). Acts as a 5'-3' exonuclease that anchors at a cut end of DNA and cleaves DNA successively at every third nucleotide, allowing to excise an ICL from one strand through flanking incisions. In Oryza sativa subsp. japonica (Rice), this protein is Fanconi-associated nuclease 1 homolog.